The chain runs to 615 residues: Isocitrate dehydrogenase kinase/phosphatase (615 aa).

ATP-binding positions include 325-331 and lysine 346; that span reads APGIKGM. Aspartate 381 is a catalytic residue.

Belongs to the AceK family.

The protein resides in the cytoplasm. It catalyses the reaction L-seryl-[isocitrate dehydrogenase] + ATP = O-phospho-L-seryl-[isocitrate dehydrogenase] + ADP + H(+). Bifunctional enzyme which can phosphorylate or dephosphorylate isocitrate dehydrogenase (IDH) on a specific serine residue. This is a regulatory mechanism which enables bacteria to bypass the Krebs cycle via the glyoxylate shunt in response to the source of carbon. When bacteria are grown on glucose, IDH is fully active and unphosphorylated, but when grown on acetate or ethanol, the activity of IDH declines drastically concomitant with its phosphorylation. The sequence is that of Isocitrate dehydrogenase kinase/phosphatase from Albidiferax ferrireducens (strain ATCC BAA-621 / DSM 15236 / T118) (Rhodoferax ferrireducens).